The sequence spans 101 residues: Putative pterin-4-alpha-carbinolamine dehydratase (101 aa).

Belongs to the pterin-4-alpha-carbinolamine dehydratase family.

It carries out the reaction (4aS,6R)-4a-hydroxy-L-erythro-5,6,7,8-tetrahydrobiopterin = (6R)-L-erythro-6,7-dihydrobiopterin + H2O. The protein is Putative pterin-4-alpha-carbinolamine dehydratase (phhB) of Ralstonia nicotianae (strain ATCC BAA-1114 / GMI1000) (Ralstonia solanacearum).